An 80-amino-acid chain; its full sequence is UPF0512 protein J (80 aa).

It belongs to the UPF0512 family.

This chain is UPF0512 protein J, found in Dictyostelium discoideum (Social amoeba).